Consider the following 317-residue polypeptide: Glutathione synthetase (317 aa).

One can recognise an ATP-grasp domain in the interval 124–310 (EKLFTAWFPE…ITGKLMDAIE (187 aa)). 150–207 (FRQEHGDIILKPLDGMGGASIFRVKENDPNVSVIIETLTNHGQNYAMAQTFVPDISNG) is a binding site for ATP. Positions 281 and 283 each coordinate Mg(2+).

Belongs to the prokaryotic GSH synthase family. The cofactor is Mg(2+). Mn(2+) serves as cofactor.

It carries out the reaction gamma-L-glutamyl-L-cysteine + glycine + ATP = glutathione + ADP + phosphate + H(+). It functions in the pathway sulfur metabolism; glutathione biosynthesis; glutathione from L-cysteine and L-glutamate: step 2/2. In Vibrio vulnificus (strain CMCP6), this protein is Glutathione synthetase.